The primary structure comprises 219 residues: Carbonic anhydrase 1 (219 aa).

Residues Cys-39, Asp-41, His-98, and Cys-101 each contribute to the Zn(2+) site.

The protein belongs to the beta-class carbonic anhydrase family. As to quaternary structure, oligomer. Zn(2+) is required as a cofactor.

The enzyme catalyses hydrogencarbonate + H(+) = CO2 + H2O. In terms of biological role, reversible hydration of carbon dioxide. Carbon dioxide formed in the bicarbonate-dependent decomposition of cyanate by cyanase (CynS) diffuses out of the cell faster than it would be hydrated to bicarbonate, so the apparent function of this enzyme is to catalyze the hydration of carbon dioxide and thus prevent depletion of cellular bicarbonate. This is Carbonic anhydrase 1 (cynT) from Escherichia coli O157:H7.